Here is a 176-residue protein sequence, read N- to C-terminus: HTH-type transcriptional regulator DctR (176 aa).

Positions 109 to 174 (VPEADVSLSR…ELVRHQHINY (66 aa)) constitute an HTH luxR-type domain. The H-T-H motif DNA-binding region spans 133 to 152 (TEDILEKLKISLKTFYCHKH).

In terms of biological role, may act as a transcriptional regulator of dctA. The protein is HTH-type transcriptional regulator DctR (dctR) of Escherichia coli O6:H1 (strain CFT073 / ATCC 700928 / UPEC).